A 375-amino-acid chain; its full sequence is Succinyl-diaminopimelate desuccinylase (375 aa).

A Zn(2+)-binding site is contributed by His-66. Asp-68 is a catalytic residue. Zn(2+) is bound at residue Asp-99. The Proton acceptor role is filled by Glu-133. Residues Glu-134, Glu-162, and His-348 each contribute to the Zn(2+) site.

The protein belongs to the peptidase M20A family. DapE subfamily. Homodimer. Zn(2+) serves as cofactor. It depends on Co(2+) as a cofactor.

It carries out the reaction N-succinyl-(2S,6S)-2,6-diaminopimelate + H2O = (2S,6S)-2,6-diaminopimelate + succinate. It functions in the pathway amino-acid biosynthesis; L-lysine biosynthesis via DAP pathway; LL-2,6-diaminopimelate from (S)-tetrahydrodipicolinate (succinylase route): step 3/3. Its function is as follows. Catalyzes the hydrolysis of N-succinyl-L,L-diaminopimelic acid (SDAP), forming succinate and LL-2,6-diaminopimelate (DAP), an intermediate involved in the bacterial biosynthesis of lysine and meso-diaminopimelic acid, an essential component of bacterial cell walls. This is Succinyl-diaminopimelate desuccinylase from Yersinia enterocolitica serotype O:8 / biotype 1B (strain NCTC 13174 / 8081).